A 244-amino-acid chain; its full sequence is Probable cytokinin riboside 5'-monophosphate phosphoribohydrolase LOGL2 (244 aa).

Substrate is bound by residues E91, R109–K110, and G126–E132.

It belongs to the LOG family.

It catalyses the reaction N(6)-(dimethylallyl)adenosine 5'-phosphate + H2O = N(6)-dimethylallyladenine + D-ribose 5-phosphate. The enzyme catalyses 9-ribosyl-trans-zeatin 5'-phosphate + H2O = trans-zeatin + D-ribose 5-phosphate. Cytokinin-activating enzyme working in the direct activation pathway. Phosphoribohydrolase that converts inactive cytokinin nucleotides to the biologically active free-base forms. This chain is Probable cytokinin riboside 5'-monophosphate phosphoribohydrolase LOGL2 (LOGL2), found in Oryza sativa subsp. japonica (Rice).